Consider the following 184-residue polypeptide: Zinc metalloproteinase-disintegrin-like ammodytagin (184 aa).

The 90-residue stretch at 1 to 90 folds into the Peptidase M12B domain; the sequence is KSAAXVTLDL…CPAKCIDNKP (90 aa). Asp-20 provides a ligand contact to Ca(2+). A Zn(2+)-binding site is contributed by His-64. The active site involves Glu-65. 2 residues coordinate Zn(2+): His-68 and His-74. The Ca(2+) site is built by Asn-88, Val-100, Asn-103, Phe-105, and Glu-107. A Disintegrin domain is found at 98–124; the sequence is PAVCGNYFVELTPGSQCADGVCCDQCR. Intrachain disulfides connect Cys-114/Cys-120 and Cys-165/Cys-177.

It belongs to the venom metalloproteinase (M12B) family. P-III subfamily. P-IIIc sub-subfamily. Heterodimer; disulfide-linked. Zn(2+) is required as a cofactor. The N-terminus is blocked. Post-translationally, N-glycosylated. Expressed by the venom gland.

The protein localises to the secreted. With respect to regulation, inhibited by EDTA, DTT and zinc ions. Partially inhibited by L-cysteine. Not inhibited by 2-propanol or PMSF. Activity is enhanced by calcium or magnesium ions. Its function is as follows. Snake venom zinc metalloprotease that has fibrinogenolytic and hemorrhagic activities in mouse and rats. Hydrolyzes the Aalpha-chain (FGA) and more slowly the Bbeta-chain of fibrinogen (FGB), without affecting the gamma-chain. Its hemorrhagic activity results of its involvement in cleavage of basal membrane components (nidogen and fibronectin but not laminin) and depletion of fibrinogen, prothrombin (F2) and factor X (F10) in blood circulation. Also possess potent azocaseinolytic activity and cleaves insulin B-chain, hydrolyzing it at positions Gln(4)-His(5), His(10)-Leu(11) and Tyr(16)-Leu(17). In Vipera ammodytes ammodytes (Western sand viper), this protein is Zinc metalloproteinase-disintegrin-like ammodytagin.